We begin with the raw amino-acid sequence, 54 residues long: UPF0391 membrane protein Reut_A0124 (54 aa).

2 helical membrane-spanning segments follow: residues 5 to 25 (ALVF…GIAA) and 30 to 50 (IAKI…VMGL).

Belongs to the UPF0391 family.

It is found in the cell membrane. The sequence is that of UPF0391 membrane protein Reut_A0124 from Cupriavidus pinatubonensis (strain JMP 134 / LMG 1197) (Cupriavidus necator (strain JMP 134)).